Consider the following 204-residue polypeptide: Protein C (204 aa).

The disordered stretch occupies residues 1–78 (MPSFLRGILK…TEQSQRRPKI (78 aa)). The segment covering 10–20 (KPKERHHENKN) has biased composition (basic and acidic residues). Residues 25 to 34 (SSDSLTSSYP) show a composition bias toward low complexity.

This sequence belongs to the respirovirus protein C family.

The polypeptide is Protein C (P/V/C) (Homo sapiens (Human)).